We begin with the raw amino-acid sequence, 217 residues long: GTP cyclohydrolase 1 (217 aa).

Positions 109, 112, and 180 each coordinate Zn(2+).

The protein belongs to the GTP cyclohydrolase I family. Toroid-shaped homodecamer, composed of two pentamers of five dimers.

The catalysed reaction is GTP + H2O = 7,8-dihydroneopterin 3'-triphosphate + formate + H(+). Its pathway is cofactor biosynthesis; 7,8-dihydroneopterin triphosphate biosynthesis; 7,8-dihydroneopterin triphosphate from GTP: step 1/1. In Photobacterium profundum (strain SS9), this protein is GTP cyclohydrolase 1.